We begin with the raw amino-acid sequence, 259 residues long: Protein IQ-DOMAIN 10 (259 aa).

Residues 18–39 (KNKSNRGNVHSETSNRVKPVES) are disordered. The 28-residue stretch at 50 to 77 (EVAVIRIQKAFRAFKARKRLCSLKSARR) folds into the IQ domain. Residues 61–71 (RAFKARKRLCS) are calmodulin-binding. The disordered stretch occupies residues 226 to 259 (KPSKKPEKSSPNNVITKTSAKPDEVGNSKKPGSG).

The protein belongs to the IQD family. In terms of assembly, binds to multiple calmodulin (CaM) in the presence of Ca(2+) and CaM-like proteins.

The protein resides in the nucleus. It is found in the cytoplasm. It localises to the cytoskeleton. Functionally, may be involved in cooperative interactions with calmodulins or calmodulin-like proteins. Recruits calmodulin proteins to microtubules, thus being a potential scaffold in cellular signaling and trafficking. May associate with nucleic acids and regulate gene expression at the transcriptional or post-transcriptional level. The sequence is that of Protein IQ-DOMAIN 10 from Arabidopsis thaliana (Mouse-ear cress).